Reading from the N-terminus, the 221-residue chain is UPF0502 protein PA14_19450 (221 aa).

It belongs to the UPF0502 family.

This Pseudomonas aeruginosa (strain UCBPP-PA14) protein is UPF0502 protein PA14_19450.